A 222-amino-acid chain; its full sequence is Small ribosomal subunit protein uS5 (222 aa).

The segment at 1-41 is disordered; the sequence is MAEQAGAGSAQDNRGGGRDDRGGRGRRDDRGGRGGRDDREK. Residues 15-41 show a composition bias toward basic and acidic residues; sequence GGGRDDRGGRGRRDDRGGRGGRDDREK. The 64-residue stretch at 44–107 folds into the S5 DRBM domain; sequence YLERVVTINR…EEARKNFFRV (64 aa).

It belongs to the universal ribosomal protein uS5 family. In terms of assembly, part of the 30S ribosomal subunit. Contacts proteins S4 and S8.

Functionally, with S4 and S12 plays an important role in translational accuracy. Located at the back of the 30S subunit body where it stabilizes the conformation of the head with respect to the body. The protein is Small ribosomal subunit protein uS5 of Mycolicibacterium gilvum (strain PYR-GCK) (Mycobacterium gilvum (strain PYR-GCK)).